The chain runs to 439 residues: C4-dicarboxylate transport protein (439 aa).

9 helical membrane passes run 10 to 30, 45 to 65, 77 to 97, 145 to 165, 185 to 205, 223 to 243, 290 to 310, 332 to 352, and 353 to 373; these read LYVQVLAAIVIGVVLGHFYPP, LIKMIIAPVIFCTVVLGIAGM, LALLYFEIVSTLALIVGLVLV, AFAKGDILQVLLISVLFGFAL, VLFAIVGTIMKAAPIGAFGAM, LMGTFYLTCLFFIFAVLGTIT, VVGLVIPTGYSFNLDGTAIYL, TLLAVLLLTSKGAAGITGSGF, and IVLAASLSAVGHLPVAGLALI. A disordered region spans residues 415–439; the sequence is LNGQTAEEASAPQALPDRMESRIHH.

The protein belongs to the dicarboxylate/amino acid:cation symporter (DAACS) (TC 2.A.23) family.

The protein resides in the cell inner membrane. Responsible for the transport of dicarboxylates such as succinate, fumarate, and malate from the periplasm across the membrane. This is C4-dicarboxylate transport protein from Verminephrobacter eiseniae (strain EF01-2).